Here is a 644-residue protein sequence, read N- to C-terminus: Chaperone protein DnaK (644 aa).

Residue Thr199 is modified to Phosphothreonine; by autocatalysis. A disordered region spans residues 589–644 (QALAEASHKLAEKMYSQGQGPQAGPGEEPSGQSGGTEKPVEGEVVDAEFEEVKNKK). A compositionally biased stretch (low complexity) spans 604–619 (SQGQGPQAGPGEEPSG).

Belongs to the heat shock protein 70 family.

Acts as a chaperone. The chain is Chaperone protein DnaK from Nitrosospira multiformis (strain ATCC 25196 / NCIMB 11849 / C 71).